The primary structure comprises 113 residues: Nucleoid-associated protein Syncc9902_0023 (113 aa).

It belongs to the YbaB/EbfC family. As to quaternary structure, homodimer.

Its subcellular location is the cytoplasm. It is found in the nucleoid. Binds to DNA and alters its conformation. May be involved in regulation of gene expression, nucleoid organization and DNA protection. The chain is Nucleoid-associated protein Syncc9902_0023 from Synechococcus sp. (strain CC9902).